A 764-amino-acid polypeptide reads, in one-letter code: MVEERGSSRSSRGGSWGSGEDGGSSHGGKGVPKLSRTVAKKIHKYDVSADHSDYEDDGSVHSTSSSGSRRNPLSKSIIQQQSFRVGANFEEDLKTLYELIGVSKPADLAISASDWQSRGKSIAYSQPLSSPSLSQEHGEASHSNDLKPSIIDFRSEAPAASPRELPVAPVKLDAHERMTYRSDYVNSQPQNHYGRKNSPSQRSPPPESFPAFDSSPSRLGREGYGLHRMQSDPVMPTLGALSPLGTGNAHPESAGSTATRRWSFDLVPGNHEGDYANMSQVVRDNLPSAAVAMPKNGLVRRSPIIRDPNRSNSSVSNPYAQRQYPNLAEEAESSAKPESSAIPDSSAMPELPAKLESTAVPELSAKPESNAKPESEPEQDSSVEARTEHYGSVRKSKIPSALIIDKFEEPSIVSTGRSPGVVSKRPPWDTWFKGDFIGSGTFGSVYEGIDNNGMFFAVKEVSLKDQGKVGQEAIKQLEHEIALLSDIQHPNIVQYLGTERDDEKLYIFLELVSKGSLASLYKKYYFVYDQVRAYTKQILSGLKYLHDRKIIHRDIKCANILVDTNGVVKLADFGMAKQVDKLGLLKSFMGSAHWMAPEVVNPKRQYNFLADIWSLGCTVLEMATGDAPFGELECHSVLWKVGNGEGPLIPDDLEDEMKDFISKCLEVTVGNRPTCDMLLTHPFITGEPMTGPVKLVPMPELSTISEERSIDVSESPSIATSSQSGSSPSVAGDAVSPASVAVRPRSMRTLRSEFSMSSPESIAS.

Disordered regions lie at residues 1–81 (MVEE…IQQQ), 120–260 (KSIA…TATR), 325–348 (PNLA…SSAM), and 360–392 (VPEL…HYGS). Residues 14–30 (GSWGSGEDGGSSHGGKG) are compositionally biased toward gly residues. 2 stretches are compositionally biased toward low complexity: residues 60-76 (VHST…LSKS) and 125-135 (SQPLSSPSLSQ). A compositionally biased stretch (basic and acidic residues) spans 136–145 (EHGEASHSND). The segment covering 184–201 (YVNSQPQNHYGRKNSPSQ) has biased composition (polar residues). Residues 431-684 (WFKGDFIGSG…CDMLLTHPFI (254 aa)) enclose the Protein kinase domain. ATP-binding positions include 437-445 (IGSGTFGSV) and Lys459. The Proton acceptor role is filled by Asp554. Positions 706-764 (EERSIDVSESPSIATSSQSGSSPSVAGDAVSPASVAVRPRSMRTLRSEFSMSSPESIAS) are disordered. Over residues 715 to 729 (SPSIATSSQSGSSPS) the composition is skewed to low complexity. Polar residues predominate over residues 752–764 (SEFSMSSPESIAS).

This sequence belongs to the protein kinase superfamily. STE Ser/Thr protein kinase family. MAP kinase kinase kinase subfamily.

Its subcellular location is the cell membrane. It carries out the reaction L-seryl-[protein] + ATP = O-phospho-L-seryl-[protein] + ADP + H(+). It catalyses the reaction L-threonyl-[protein] + ATP = O-phospho-L-threonyl-[protein] + ADP + H(+). Functionally, the CERK1, MEKK1a/b, MKK1a/b/c and MPK4a/b proteins are involved in pathogen defense. The pathway induces rapid growth inhibition, cell wall depositions and accumulation of defense-related transcripts. This protein is required for responses to chitin and acts redundantly with MEKK1a. The chain is Mitogen-activated protein kinase kinase kinase 1b (MEKK1b) from Physcomitrium patens (Spreading-leaved earth moss).